Consider the following 357-residue polypeptide: Peptide chain release factor 1 (357 aa).

The residue at position 236 (Gln-236) is an N5-methylglutamine.

It belongs to the prokaryotic/mitochondrial release factor family. Post-translationally, methylated by PrmC. Methylation increases the termination efficiency of RF1.

It is found in the cytoplasm. Functionally, peptide chain release factor 1 directs the termination of translation in response to the peptide chain termination codons UAG and UAA. In Mycobacterium sp. (strain JLS), this protein is Peptide chain release factor 1.